The chain runs to 377 residues: Benzylmalonyl-CoA dehydrogenase (377 aa).

Residues 123–132 (ICMTEPNAGS), 156–158 (WIT), Arg-266, Gln-277, and 363–365 (TSE) each bind FAD.

It belongs to the acyl-CoA dehydrogenase family. Homotetramer. Requires FAD as cofactor.

The catalysed reaction is (2-aminobenzyl)malonyl-CoA + O2 + H(+) = (E)-2-aminocinnamoyl-CoA + H2O2 + CO2. It carries out the reaction benzylmalonyl-CoA + O2 + H(+) = (E)-cinnamoyl-CoA + H2O2 + CO2. Involved in degradation of indoleacetate, the most common member of the auxin class of plant hormones. Catalyzes the irreversible oxidative decarboxylation of (2-aminobenzyl)malonyl-CoA to 2-aminocinnamoyl-CoA and CO(2). In vitro, shows high catalytic efficiency with benzylmalonyl-CoA, a chemical analog of the physiological substrate, but otherwise accepts only a few medium-chain alkylmalonyl-CoA compounds as alternative substrates with low activities. In Aromatoleum aromaticum (strain DSM 19018 / LMG 30748 / EbN1) (Azoarcus sp. (strain EbN1)), this protein is Benzylmalonyl-CoA dehydrogenase.